A 444-amino-acid polypeptide reads, in one-letter code: N-succinylarginine dihydrolase (444 aa).

Substrate is bound by residues 19 to 28, N110, and 137 to 138; these read AGLSFGNVAS and HR. The active site involves E174. R214 lines the substrate pocket. H250 is a catalytic residue. Substrate is bound by residues D252 and N362. The active-site Nucleophile is C368.

It belongs to the succinylarginine dihydrolase family. Homodimer.

The enzyme catalyses N(2)-succinyl-L-arginine + 2 H2O + 2 H(+) = N(2)-succinyl-L-ornithine + 2 NH4(+) + CO2. The protein operates within amino-acid degradation; L-arginine degradation via AST pathway; L-glutamate and succinate from L-arginine: step 2/5. Functionally, catalyzes the hydrolysis of N(2)-succinylarginine into N(2)-succinylornithine, ammonia and CO(2). This chain is N-succinylarginine dihydrolase, found in Shewanella frigidimarina (strain NCIMB 400).